Consider the following 172-residue polypeptide: Adenylate kinase isoenzyme 6 (172 aa).

Residues G13, G15, K16, T17, and T18 each coordinate ATP. The interval N33–L56 is NMPbind. The interval T108–D118 is LID. Residue R109 coordinates ATP.

The protein belongs to the adenylate kinase family. AK6 subfamily. In terms of assembly, monomer and homodimer. Interacts with small ribosomal subunit protein uS11. Not a structural component of 43S pre-ribosomes, but transiently interacts with them by binding to uS11. Interacts with COIL (via C-terminus).

The protein localises to the cytoplasm. Its subcellular location is the nucleus. It is found in the nucleoplasm. It localises to the cajal body. It carries out the reaction AMP + ATP = 2 ADP. The catalysed reaction is ATP + H2O = ADP + phosphate + H(+). Functionally, broad-specificity nucleoside monophosphate (NMP) kinase that catalyzes the reversible transfer of the terminal phosphate group between nucleoside triphosphates and monophosphates. Also has ATPase activity. Involved in the late cytoplasmic maturation steps of the 40S ribosomal particles, specifically 18S rRNA maturation. While NMP activity is not required for ribosome maturation, ATPase activity is. Associates transiently with small ribosomal subunit protein uS11. ATP hydrolysis breaks the interaction with uS11. May temporarily remove uS11 from the ribosome to enable a conformational change of the ribosomal RNA that is needed for the final maturation step of the small ribosomal subunit. Its NMP activity may have a role in nuclear energy homeostasis. May be involved in regulation of Cajal body (CB) formation. The chain is Adenylate kinase isoenzyme 6 from Mus musculus (Mouse).